A 432-amino-acid polypeptide reads, in one-letter code: MNITFIGSGYVGLVSGIIMGYLGHNVTCLDNDEVKISKLNKQILPIYEAKLDEYLKQALESDRLKFTNIYNNELQNADAIFITVGTPSKGLGEADLKYVYDAIDKVFEHINKDCLIVIKSTVPPGSCSNIIAYLKSRGFSFNVASNPEFLREGSAVEDFLYPDRIVIGVNNKESEAILRKIYAPLQGVKFVVTDLVTSELIKYASNSFLATKIAFINEMADLCEKIGGNIKDLSKGVGLDQRIGQNFLNAGPGFGGSCFPKDILALNNLVENHHIDCRILKAVIKSNKQRPSNMVDKIATLLDGDLKGKNIAILGLTYKAGTDDVRASPAIAIVKILLNKDVYVKAFDPIGLENAKKNLEHKNLLYLDSAVDACKSVDIIVIATEWSEFKELNWQEIYDLVKSPIIIDFRNILDNETMKKIGFRYYAVGSKI.

Residues 2-19, Val-11, Asp-30, Lys-35, Thr-121, and Glu-152 each bind NAD(+); that span reads NITFIGSGYVGLVSGIIM. Residues 148–152, Lys-202, Asn-206, 247–251, and Gly-255 each bind substrate; these read EFLRE and FLNAG. Catalysis depends on Cys-258, which acts as the Nucleophile. An NAD(+)-binding site is contributed by Lys-261. Lys-319 contacts substrate. Residue Arg-326 coordinates NAD(+).

The protein belongs to the UDP-glucose/GDP-mannose dehydrogenase family.

The catalysed reaction is UDP-alpha-D-glucose + 2 NAD(+) + H2O = UDP-alpha-D-glucuronate + 2 NADH + 3 H(+). It participates in nucleotide-sugar biosynthesis; UDP-alpha-D-glucuronate biosynthesis; UDP-alpha-D-glucuronate from UDP-alpha-D-glucose: step 1/1. The chain is UDP-glucose 6-dehydrogenase (udg) from Rickettsia conorii (strain ATCC VR-613 / Malish 7).